Here is a 582-residue protein sequence, read N- to C-terminus: Adenine deaminase (582 aa).

The protein belongs to the metallo-dependent hydrolases superfamily. Adenine deaminase family. It depends on Mn(2+) as a cofactor.

It carries out the reaction adenine + H2O + H(+) = hypoxanthine + NH4(+). The chain is Adenine deaminase from Oceanobacillus iheyensis (strain DSM 14371 / CIP 107618 / JCM 11309 / KCTC 3954 / HTE831).